Here is a 166-residue protein sequence, read N- to C-terminus: Small ribosomal subunit protein uS9 (166 aa).

Positions 135–166 (KKAGFLTRDPRATERKKYGLKKARKAPQYSKR) are disordered. Residues 142-151 (RDPRATERKK) show a composition bias toward basic and acidic residues. Over residues 152 to 166 (YGLKKARKAPQYSKR) the composition is skewed to basic residues.

This sequence belongs to the universal ribosomal protein uS9 family.

The sequence is that of Small ribosomal subunit protein uS9 from Mycolicibacterium paratuberculosis (strain ATCC BAA-968 / K-10) (Mycobacterium paratuberculosis).